A 340-amino-acid polypeptide reads, in one-letter code: NADH-quinone oxidoreductase subunit H (340 aa).

Helical transmembrane passes span 9-29, 81-101, 113-133, 158-178, 184-204, 221-240, 245-264, 273-293, and 316-336; these read IWII…VAFI, LIAP…IPFA, LLFL…AGWA, GFAL…GIVL, LWHW…ITAV, IVAG…FFLA, MVLV…LSPF, LFAW…FIFT, and VLIP…EFHW.

This sequence belongs to the complex I subunit 1 family. In terms of assembly, NDH-1 is composed of 14 different subunits. Subunits NuoA, H, J, K, L, M, N constitute the membrane sector of the complex.

The protein resides in the cell inner membrane. It carries out the reaction a quinone + NADH + 5 H(+)(in) = a quinol + NAD(+) + 4 H(+)(out). NDH-1 shuttles electrons from NADH, via FMN and iron-sulfur (Fe-S) centers, to quinones in the respiratory chain. The immediate electron acceptor for the enzyme in this species is believed to be ubiquinone. Couples the redox reaction to proton translocation (for every two electrons transferred, four hydrogen ions are translocated across the cytoplasmic membrane), and thus conserves the redox energy in a proton gradient. This subunit may bind ubiquinone. In Coxiella burnetii (strain CbuK_Q154) (Coxiella burnetii (strain Q154)), this protein is NADH-quinone oxidoreductase subunit H.